The primary structure comprises 456 residues: Bifunctional protein GlmU (456 aa).

A pyrophosphorylase region spans residues 1–229 (MLNSAMSVVI…ISETDGVNNR (229 aa)). Residues 11-14 (LAAG), K25, Q76, 81-82 (GT), 103-105 (YGD), G140, E154, N169, and N227 each bind UDP-N-acetyl-alpha-D-glucosamine. D105 contributes to the Mg(2+) binding site. Residue N227 participates in Mg(2+) binding. Residues 230-250 (LQLSRLERIYQAEQAEKLLLS) are linker. The interval 251-456 (GVMLRDPARF…QGWQRPVKKK (206 aa)) is N-acetyltransferase. The UDP-N-acetyl-alpha-D-glucosamine site is built by R333 and K351. H363 acts as the Proton acceptor in catalysis. Residues Y366 and N377 each contribute to the UDP-N-acetyl-alpha-D-glucosamine site. Acetyl-CoA-binding positions include A380, 386–387 (NY), S405, A423, and R440.

In the N-terminal section; belongs to the N-acetylglucosamine-1-phosphate uridyltransferase family. It in the C-terminal section; belongs to the transferase hexapeptide repeat family. As to quaternary structure, homotrimer. The cofactor is Mg(2+).

The protein localises to the cytoplasm. It carries out the reaction alpha-D-glucosamine 1-phosphate + acetyl-CoA = N-acetyl-alpha-D-glucosamine 1-phosphate + CoA + H(+). It catalyses the reaction N-acetyl-alpha-D-glucosamine 1-phosphate + UTP + H(+) = UDP-N-acetyl-alpha-D-glucosamine + diphosphate. It participates in nucleotide-sugar biosynthesis; UDP-N-acetyl-alpha-D-glucosamine biosynthesis; N-acetyl-alpha-D-glucosamine 1-phosphate from alpha-D-glucosamine 6-phosphate (route II): step 2/2. The protein operates within nucleotide-sugar biosynthesis; UDP-N-acetyl-alpha-D-glucosamine biosynthesis; UDP-N-acetyl-alpha-D-glucosamine from N-acetyl-alpha-D-glucosamine 1-phosphate: step 1/1. Its pathway is bacterial outer membrane biogenesis; LPS lipid A biosynthesis. Catalyzes the last two sequential reactions in the de novo biosynthetic pathway for UDP-N-acetylglucosamine (UDP-GlcNAc). The C-terminal domain catalyzes the transfer of acetyl group from acetyl coenzyme A to glucosamine-1-phosphate (GlcN-1-P) to produce N-acetylglucosamine-1-phosphate (GlcNAc-1-P), which is converted into UDP-GlcNAc by the transfer of uridine 5-monophosphate (from uridine 5-triphosphate), a reaction catalyzed by the N-terminal domain. This Salmonella typhi protein is Bifunctional protein GlmU.